The chain runs to 149 residues: Deoxyuridine 5'-triphosphate nucleotidohydrolase (149 aa).

Substrate contacts are provided by residues 68–70, asparagine 81, and 85–87; these read RSG and LID.

This sequence belongs to the dUTPase family. Requires Mg(2+) as cofactor.

It carries out the reaction dUTP + H2O = dUMP + diphosphate + H(+). It participates in pyrimidine metabolism; dUMP biosynthesis; dUMP from dCTP (dUTP route): step 2/2. In terms of biological role, this enzyme is involved in nucleotide metabolism: it produces dUMP, the immediate precursor of thymidine nucleotides and it decreases the intracellular concentration of dUTP so that uracil cannot be incorporated into DNA. This is Deoxyuridine 5'-triphosphate nucleotidohydrolase from Nitrosomonas eutropha (strain DSM 101675 / C91 / Nm57).